The following is a 310-amino-acid chain: Homoserine kinase (310 aa).

Residue 91-101 coordinates ATP; that stretch reads PIGSGLGSSAC.

This sequence belongs to the GHMP kinase family. Homoserine kinase subfamily.

It localises to the cytoplasm. The catalysed reaction is L-homoserine + ATP = O-phospho-L-homoserine + ADP + H(+). It participates in amino-acid biosynthesis; L-threonine biosynthesis; L-threonine from L-aspartate: step 4/5. Its function is as follows. Catalyzes the ATP-dependent phosphorylation of L-homoserine to L-homoserine phosphate. The protein is Homoserine kinase of Escherichia coli O6:H1 (strain CFT073 / ATCC 700928 / UPEC).